Here is a 290-residue protein sequence, read N- to C-terminus: Phosphoribosylaminoimidazole-succinocarboxamide synthase (290 aa).

The protein belongs to the SAICAR synthetase family.

The enzyme catalyses 5-amino-1-(5-phospho-D-ribosyl)imidazole-4-carboxylate + L-aspartate + ATP = (2S)-2-[5-amino-1-(5-phospho-beta-D-ribosyl)imidazole-4-carboxamido]succinate + ADP + phosphate + 2 H(+). It participates in purine metabolism; IMP biosynthesis via de novo pathway; 5-amino-1-(5-phospho-D-ribosyl)imidazole-4-carboxamide from 5-amino-1-(5-phospho-D-ribosyl)imidazole-4-carboxylate: step 1/2. This is Phosphoribosylaminoimidazole-succinocarboxamide synthase from Haemophilus influenzae (strain PittEE).